Here is a 122-residue protein sequence, read N- to C-terminus: Large ribosomal subunit protein bL17 (122 aa).

Belongs to the bacterial ribosomal protein bL17 family. Part of the 50S ribosomal subunit. Contacts protein L32.

The sequence is that of Large ribosomal subunit protein bL17 from Staphylococcus aureus (strain Mu3 / ATCC 700698).